The chain runs to 202 residues: Na(+)-translocating NADH-quinone reductase subunit E (202 aa).

Helical transmembrane passes span 4-24 (LAGL…FFLG), 35-55 (IEVA…TVPI), 81-101 (FLGL…LEMF), 114-134 (GIYL…LFMV), 144-164 (LVYG…LAGV), and 180-200 (LGIT…FSGI).

It belongs to the NqrDE/RnfAE family. Composed of six subunits; NqrA, NqrB, NqrC, NqrD, NqrE and NqrF.

It localises to the cell inner membrane. The catalysed reaction is a ubiquinone + n Na(+)(in) + NADH + H(+) = a ubiquinol + n Na(+)(out) + NAD(+). Its function is as follows. NQR complex catalyzes the reduction of ubiquinone-1 to ubiquinol by two successive reactions, coupled with the transport of Na(+) ions from the cytoplasm to the periplasm. NqrA to NqrE are probably involved in the second step, the conversion of ubisemiquinone to ubiquinol. This Nitrosomonas europaea (strain ATCC 19718 / CIP 103999 / KCTC 2705 / NBRC 14298) protein is Na(+)-translocating NADH-quinone reductase subunit E.